Reading from the N-terminus, the 457-residue chain is tRNA-2-methylthio-N(6)-dimethylallyladenosine synthase (457 aa).

The MTTase N-terminal domain maps to 3–120 (KKVYVKTFGC…LPQMIDKRRE (118 aa)). 6 residues coordinate [4Fe-4S] cluster: Cys12, Cys49, Cys83, Cys157, Cys161, and Cys164. Residues 143 to 377 (RVDGPSAFVS…QATIEENVQR (235 aa)) enclose the Radical SAM core domain. The TRAM domain maps to 380–447 (DSMVGKIERI…PHSLRGELVL (68 aa)).

It belongs to the methylthiotransferase family. MiaB subfamily. In terms of assembly, monomer. Requires [4Fe-4S] cluster as cofactor.

The protein localises to the cytoplasm. It carries out the reaction N(6)-dimethylallyladenosine(37) in tRNA + (sulfur carrier)-SH + AH2 + 2 S-adenosyl-L-methionine = 2-methylsulfanyl-N(6)-dimethylallyladenosine(37) in tRNA + (sulfur carrier)-H + 5'-deoxyadenosine + L-methionine + A + S-adenosyl-L-homocysteine + 2 H(+). In terms of biological role, catalyzes the methylthiolation of N6-(dimethylallyl)adenosine (i(6)A), leading to the formation of 2-methylthio-N6-(dimethylallyl)adenosine (ms(2)i(6)A) at position 37 in tRNAs that read codons beginning with uridine. The protein is tRNA-2-methylthio-N(6)-dimethylallyladenosine synthase of Paraburkholderia xenovorans (strain LB400).